An 831-amino-acid chain; its full sequence is Periplasmic nitrate reductase (831 aa).

A signal peptide (tat-type signal) is located at residues 1–31 (MKLSRRDFMKANAAVAAAAAAGLTIPTVAKA). In terms of domain architecture, 4Fe-4S Mo/W bis-MGD-type spans 40–96 (IKWDKAPCRFCGTGCGVLVGTQNGRIVASQGDPDSPVNRGLNCVKGYFLPKIMYGKD). 4 residues coordinate [4Fe-4S] cluster: C47, C50, C54, and C82. Mo-bis(molybdopterin guanine dinucleotide) is bound by residues K84, Q151, N176, C180, 213 to 220 (WGSNMAEM), 244 to 248 (STFEH), 263 to 265 (QTD), M373, Q377, N483, 509 to 510 (SD), K532, D559, and 719 to 728 (TGRVLEHWHT). F795 lines the substrate pocket. Residues N803 and K820 each contribute to the Mo-bis(molybdopterin guanine dinucleotide) site.

The protein belongs to the prokaryotic molybdopterin-containing oxidoreductase family. NasA/NapA/NarB subfamily. In terms of assembly, component of the periplasmic nitrate reductase NapAB complex composed of NapA and NapB. [4Fe-4S] cluster is required as a cofactor. It depends on Mo-bis(molybdopterin guanine dinucleotide) as a cofactor. In terms of processing, predicted to be exported by the Tat system. The position of the signal peptide cleavage has not been experimentally proven.

Its subcellular location is the periplasm. The enzyme catalyses 2 Fe(II)-[cytochrome] + nitrate + 2 H(+) = 2 Fe(III)-[cytochrome] + nitrite + H2O. Its function is as follows. Catalytic subunit of the periplasmic nitrate reductase complex NapAB. Receives electrons from NapB and catalyzes the reduction of nitrate to nitrite. This chain is Periplasmic nitrate reductase, found in Yersinia enterocolitica serotype O:8 / biotype 1B (strain NCTC 13174 / 8081).